Reading from the N-terminus, the 94-residue chain is Co-chaperonin GroES (94 aa).

It belongs to the GroES chaperonin family. As to quaternary structure, heptamer of 7 subunits arranged in a ring. Interacts with the chaperonin GroEL.

The protein resides in the cytoplasm. Functionally, together with the chaperonin GroEL, plays an essential role in assisting protein folding. The GroEL-GroES system forms a nano-cage that allows encapsulation of the non-native substrate proteins and provides a physical environment optimized to promote and accelerate protein folding. GroES binds to the apical surface of the GroEL ring, thereby capping the opening of the GroEL channel. In Parageobacillus thermoglucosidasius (Geobacillus thermoglucosidasius), this protein is Co-chaperonin GroES.